A 55-amino-acid chain; its full sequence is Small integral membrane protein 27 (55 aa).

Residues 11–31 form a helical membrane-spanning segment; sequence WIYSVLLLAIVLISWGCIIYA.

It is found in the membrane. This Homo sapiens (Human) protein is Small integral membrane protein 27.